A 201-amino-acid chain; its full sequence is MEAGEEIEDGEPSTPTYKAHHPPPHLPPPMRSSGVSLVLSVADLVLRFVAIGGTAGSAIAMATTSETLPFAAPFVRFRAEYSDLPTLMFFVVASSVVCAYLVLSLPASVVHVVRPGARSSRAILAFLDTVMLALLTASASAAAAIVYLAHRGSARANWLGICQQFTSFCQRITASLVGSFAAAVVLVALVFLSALSLARRA.

A compositionally biased stretch (acidic residues) spans 1-11; that stretch reads MEAGEEIEDGE. A disordered region spans residues 1-26; it reads MEAGEEIEDGEPSTPTYKAHHPPPHL. Over 1–34 the chain is Cytoplasmic; sequence MEAGEEIEDGEPSTPTYKAHHPPPHLPPPMRSSG. The chain crosses the membrane as a helical span at residues 35–55; it reads VSLVLSVADLVLRFVAIGGTA. Topologically, residues 56 to 86 are extracellular; it reads GSAIAMATTSETLPFAAPFVRFRAEYSDLPT. The chain crosses the membrane as a helical span at residues 87 to 107; the sequence is LMFFVVASSVVCAYLVLSLPA. Over 108 to 128 the chain is Cytoplasmic; sequence SVVHVVRPGARSSRAILAFLD. Residues 129–149 traverse the membrane as a helical segment; the sequence is TVMLALLTASASAAAAIVYLA. The Extracellular segment spans residues 150–171; sequence HRGSARANWLGICQQFTSFCQR. Residues 172-192 traverse the membrane as a helical segment; it reads ITASLVGSFAAAVVLVALVFL. Residues 193–201 are Cytoplasmic-facing; sequence SALSLARRA.

This sequence belongs to the Casparian strip membrane proteins (CASP) family. In terms of assembly, homodimer and heterodimers.

The protein localises to the cell membrane. In terms of biological role, regulates membrane-cell wall junctions and localized cell wall deposition. Required for establishment of the Casparian strip membrane domain (CSD) and the subsequent formation of Casparian strips, a cell wall modification of the root endodermis that determines an apoplastic barrier between the intraorganismal apoplasm and the extraorganismal apoplasm and prevents lateral diffusion. The chain is Casparian strip membrane protein 7 from Oryza sativa subsp. japonica (Rice).